The primary structure comprises 314 residues: Glycerate dehydrogenase (314 aa).

NAD(+) contacts are provided by residues T74, 157-158 (AL), 228-230 (TAR), and D254. The active site involves R230. E259 is an active-site residue. Residue H280 is the Proton donor of the active site. Residue 280-283 (HVAW) participates in NAD(+) binding.

This sequence belongs to the D-isomer specific 2-hydroxyacid dehydrogenase family. As to quaternary structure, homodimer.

Its subcellular location is the cytoplasm. It catalyses the reaction (R)-glycerate + NAD(+) = 3-hydroxypyruvate + NADH + H(+). The protein operates within one-carbon metabolism; formaldehyde assimilation via serine pathway. In terms of biological role, plays a central role in assimilation of carbon. It converts hydroxypyruvate to glycerate as a key step in the serine cycle, and may also play an important role in C2 reactions, by interconverting glyoxylate and glycolate. The chain is Glycerate dehydrogenase (hprA) from Methylorubrum extorquens (strain ATCC 14718 / DSM 1338 / JCM 2805 / NCIMB 9133 / AM1) (Methylobacterium extorquens).